A 163-amino-acid chain; its full sequence is Phosphopantetheine adenylyltransferase (163 aa).

Residue Thr9 coordinates substrate. Residues 9 to 10 (TF) and His17 contribute to the ATP site. Substrate is bound by residues Lys41, Leu76, and Arg90. ATP-binding positions include 91–93 (GLR), Glu101, and 126–132 (HQAIASR).

It belongs to the bacterial CoaD family. Homohexamer. The cofactor is Mg(2+).

Its subcellular location is the cytoplasm. The enzyme catalyses (R)-4'-phosphopantetheine + ATP + H(+) = 3'-dephospho-CoA + diphosphate. It functions in the pathway cofactor biosynthesis; coenzyme A biosynthesis; CoA from (R)-pantothenate: step 4/5. Reversibly transfers an adenylyl group from ATP to 4'-phosphopantetheine, yielding dephospho-CoA (dPCoA) and pyrophosphate. This is Phosphopantetheine adenylyltransferase from Caulobacter vibrioides (strain ATCC 19089 / CIP 103742 / CB 15) (Caulobacter crescentus).